The primary structure comprises 123 residues: Large ribosomal subunit protein bL12 (123 aa).

This sequence belongs to the bacterial ribosomal protein bL12 family. As to quaternary structure, homodimer. Part of the ribosomal stalk of the 50S ribosomal subunit. Forms a multimeric L10(L12)X complex, where L10 forms an elongated spine to which 2 to 4 L12 dimers bind in a sequential fashion. Binds GTP-bound translation factors.

Functionally, forms part of the ribosomal stalk which helps the ribosome interact with GTP-bound translation factors. Is thus essential for accurate translation. This Acinetobacter baumannii (strain AB307-0294) protein is Large ribosomal subunit protein bL12.